The primary structure comprises 285 residues: Chitinase 4 (285 aa).

The first 27 residues, 1–27 (MAAKMATMVALVFGLALLLSAAAPAAA), serve as a signal peptide directing secretion. Residues 28–62 (QNCGCQDGYCCSQWGYCGTTEAYCGQGCQSGPCWG) enclose the Chitin-binding type-1 domain. 7 disulfide bridges follow: Cys-30–Cys-38, Cys-32–Cys-44, Cys-37–Cys-51, Cys-55–Cys-60, Cys-104–Cys-153, Cys-166–Cys-175, and Cys-253–Cys-285. The Proton donor role is filled by Glu-148.

The protein belongs to the glycosyl hydrolase 19 family. Chitinase class IV subfamily. In terms of tissue distribution, expressed at low levels in leaves, sheaths and meristems.

It catalyses the reaction Random endo-hydrolysis of N-acetyl-beta-D-glucosaminide (1-&gt;4)-beta-linkages in chitin and chitodextrins.. Its function is as follows. Hydrolyzes chitin and may function in reproductive organs during embryogenesis and seed maturation. In Oryza sativa subsp. japonica (Rice), this protein is Chitinase 4 (Cht4).